A 287-amino-acid polypeptide reads, in one-letter code: Myogenin (287 aa).

Ser77 and Ser79 each carry phosphoserine; by CaMK2G. One can recognise a bHLH domain in the interval 81-132; that stretch reads DRRRAATLREKRRLKKVNEAFEALKRSTLLNPNQRLPKVEILRSAIQYIERL. Thr87 carries the phosphothreonine; by CaMK2G modification.

As to quaternary structure, homodimer and heterodimer with E12; heterodimerization enhances MYOG DNA-binding and transcriptional activities. Interacts with SMARCA4/BRG1/BAF190A. Interacts (via C-terminal region) with SSRP1 and SUPT16H; the interaction is indicative of an interaction with the FACT complex. Interacts with CSRP3. Phosphorylated by CAMK2G on threonine and serine amino acids in a muscle activity-dependent manner. Phosphorylation of Thr-87 impairs both DNA-binding and trans-activation functions in contracting muscles. In terms of tissue distribution, expressed in muscle (at protein level).

It is found in the nucleus. In terms of biological role, acts as a transcriptional activator that promotes transcription of muscle-specific target genes and plays a role in muscle differentiation, cell cycle exit and muscle atrophy. Essential for the development of functional embryonic skeletal fiber muscle differentiation. However is dispensable for postnatal skeletal muscle growth; phosphorylation by CAMK2G inhibits its transcriptional activity in respons to muscle activity. Required for the recruitment of the FACT complex to muscle-specific promoter regions, thus promoting gene expression initiation. During terminal myoblast differentiation, plays a role as a strong activator of transcription at loci with an open chromatin structure previously initiated by MYOD1. Together with MYF5 and MYOD1, co-occupies muscle-specific gene promoter core regions during myogenesis. Also cooperates with myocyte-specific enhancer factor MEF2D and BRG1-dependent recruitment of SWI/SNF chromatin-remodeling enzymes to alter chromatin structure at myogenic late gene promoters. Facilitates cell cycle exit during terminal muscle differentiation through the up-regulation of miR-20a expression, which in turn represses genes involved in cell cycle progression. Binds to the E-box containing (E1) promoter region of the miR-20a gene. Also plays a role in preventing reversal of muscle cell differentiation. Contributes to the atrophy-related gene expression in adult denervated muscles. Induces fibroblasts to differentiate into myoblasts. The polypeptide is Myogenin (Myog) (Rattus norvegicus (Rat)).